A 680-amino-acid polypeptide reads, in one-letter code: GTPase Obg (680 aa).

The Obg domain maps to 2 to 160; the sequence is DQFIDVVSFE…LNIRLEVKLI (159 aa). The OBG-type G domain maps to 161–336; that stretch reads ADIGLVGMPN…LDGDMLDKVT (176 aa). GTP is bound by residues 167–174, 192–196, 214–217, 281–284, and 317–319; these read GMPNTGKS, FTTLT, DIPG, NKTD, and PEI. Mg(2+) is bound by residues Ser-174 and Thr-194. The radical SAM domain stretch occupies residues 371 to 680; that stretch reads TKRVFGPVVS…NGVLSYAVNI (310 aa). The Radical SAM core domain maps to 383 to 613; the sequence is LGNSLGIDVI…IEIDVPSVSD (231 aa). Cys-397, Cys-401, and Cys-404 together coordinate [4Fe-4S] cluster.

Belongs to the TRAFAC class OBG-HflX-like GTPase superfamily. OBG GTPase family. In terms of assembly, monomer. Requires Mg(2+) as cofactor. [4Fe-4S] cluster is required as a cofactor.

The protein resides in the cytoplasm. Functionally, an essential GTPase which binds GTP, GDP and possibly (p)ppGpp with moderate affinity, with high nucleotide exchange rates and a fairly low GTP hydrolysis rate. Plays a role in control of the cell cycle, stress response, ribosome biogenesis and in those bacteria that undergo differentiation, in morphogenesis control. The chain is GTPase Obg from Brachyspira hyodysenteriae (strain ATCC 49526 / WA1).